The following is a 323-amino-acid chain: RING-H2 finger protein ATL32 (323 aa).

The N-terminal stretch at 1-28 (MMTRVECFNPHRWIILHVAIIIQSKANA) is a signal peptide. A helical transmembrane segment spans residues 47–67 (TTVFAVLVTLFFLTGLLSVYI). The RING-type; atypical zinc finger occupies 124–166 (CAICLNELEDHETVRLLPICNHLFHIDCIDTWLYSHATCPVCR). The disordered stretch occupies residues 210 to 229 (SSEISGKFPRSNSTGHSMDR).

Belongs to the RING-type zinc finger family. ATL subfamily.

The protein resides in the membrane. The catalysed reaction is S-ubiquitinyl-[E2 ubiquitin-conjugating enzyme]-L-cysteine + [acceptor protein]-L-lysine = [E2 ubiquitin-conjugating enzyme]-L-cysteine + N(6)-ubiquitinyl-[acceptor protein]-L-lysine.. It participates in protein modification; protein ubiquitination. The polypeptide is RING-H2 finger protein ATL32 (ATL32) (Arabidopsis thaliana (Mouse-ear cress)).